A 133-amino-acid chain; its full sequence is 14 kDa fatty acid-binding protein (133 aa).

(5Z,8Z,11Z,14Z)-eicosatetraenoate contacts are provided by residues arginine 107 and 127 to 129; that span reads RNY. (9Z)-octadecenoate is bound by residues arginine 107 and 127–129; that span reads RNY.

It belongs to the calycin superfamily. Fatty-acid binding protein (FABP) family. Tubercles, muscle layers and body.

It is found in the cytoplasm. Functionally, may play a role in the transport of fatty acids. Binds various fatty acids, such as arachidonic, oleic, palmitic and linolenic acid (in vitro). This Schistosoma mansoni (Blood fluke) protein is 14 kDa fatty acid-binding protein.